A 276-amino-acid polypeptide reads, in one-letter code: Putative aliphatic sulfonates transport permease protein SsuC (276 aa).

7 helical membrane-spanning segments follow: residues 32 to 52, 54 to 74, 87 to 107, 119 to 141, 146 to 168, 199 to 219, and 242 to 262; these read GLLLPAVIIAIWQVIGGLGVV, ATVLPTPVTIVLTFKELILSG, AALGFLLGAGLGLMIGILAGF, LQMLRTVPHLAVTPLFILWFGFD, ILLIALGAFFPVYINTFNGIRGV, ILLGIRLSLGIAWLGLVVAEL, and VFAGIIIFAVVGKLTDSFVRL. Residues 80 to 260 form the ABC transmembrane type-1 domain; sequence LQISIYRAAL…VVGKLTDSFV (181 aa).

It belongs to the binding-protein-dependent transport system permease family. CysTW subfamily.

The protein resides in the cell membrane. Its function is as follows. Part of a binding-protein-dependent transport system for aliphatic sulfonates. Probably responsible for the translocation of the substrate across the membrane. The polypeptide is Putative aliphatic sulfonates transport permease protein SsuC (ssuC) (Bacillus subtilis (strain 168)).